Consider the following 353-residue polypeptide: DNA polymerase IV (353 aa).

In terms of domain architecture, UmuC spans 4–185; that stretch reads IIHVDMDCFF…LPLSKIPGVG (182 aa). The Mg(2+) site is built by D8 and D103. The active site involves E104.

Belongs to the DNA polymerase type-Y family. Monomer. The cofactor is Mg(2+).

Its subcellular location is the cytoplasm. The catalysed reaction is DNA(n) + a 2'-deoxyribonucleoside 5'-triphosphate = DNA(n+1) + diphosphate. Poorly processive, error-prone DNA polymerase involved in untargeted mutagenesis. Copies undamaged DNA at stalled replication forks, which arise in vivo from mismatched or misaligned primer ends. These misaligned primers can be extended by PolIV. Exhibits no 3'-5' exonuclease (proofreading) activity. May be involved in translesional synthesis, in conjunction with the beta clamp from PolIII. The chain is DNA polymerase IV from Serratia proteamaculans (strain 568).